We begin with the raw amino-acid sequence, 245 residues long: Ribonuclease 3 (245 aa).

The region spanning 17-146 (FAKKMNELGF…FVGALYLDQG (130 aa)) is the RNase III domain. E59 contacts Mg(2+). Residue D63 is part of the active site. D132 and E135 together coordinate Mg(2+). E135 is a catalytic residue. The region spanning 172-241 (DFKTQFQEYV…AESAYSKLKS (70 aa)) is the DRBM domain. The interval 217 to 245 (ATGQGKTKKESEQKAAESAYSKLKSNNNL) is disordered.

The protein belongs to the ribonuclease III family. In terms of assembly, homodimer. Mg(2+) serves as cofactor.

It is found in the cytoplasm. It carries out the reaction Endonucleolytic cleavage to 5'-phosphomonoester.. In terms of biological role, digests double-stranded RNA. Involved in the processing of primary rRNA transcript to yield the immediate precursors to the large and small rRNAs (23S and 16S). Processes some mRNAs, and tRNAs when they are encoded in the rRNA operon. Processes pre-crRNA and tracrRNA of type II CRISPR loci if present in the organism. This is Ribonuclease 3 from Staphylococcus haemolyticus (strain JCSC1435).